A 224-amino-acid polypeptide reads, in one-letter code: NBPF family member NBPF6-like protein (224 aa).

Residues 159–224 (ENHHDRKDEE…ASVCDVQDQL (66 aa)) enclose the Olduvai domain. Positions 198-209 (YLTHSSHHDSHR) are enriched in basic and acidic residues. The disordered stretch occupies residues 198–224 (YLTHSSHHDSHRPPSSIASVCDVQDQL).

This sequence belongs to the NBPF family.

This chain is NBPF family member NBPF6-like protein, found in Bos taurus (Bovine).